A 224-amino-acid chain; its full sequence is LRP chaperone MESD (224 aa).

Residues 1-29 form the signal peptide; it reads MAASRWLRAVLLFLCASDLLLLPPPNAYA. Residues 1–155 are chaperone domain; that stretch reads MAASRWLRAV…DRAIFMLRDG (155 aa). 2 disordered regions span residues 28–49 and 178–224; these read YAADTPGEATPPPRKKKDIRDY and GQMY…REDL. The escort domain stretch occupies residues 156 to 195; sequence SYAWEIKDFLVSQDRCAEVTLEGQMYPGKGGGSKEKNKTK. Residues 187 to 224 are compositionally biased toward basic and acidic residues; the sequence is GSKEKNKTKPEKAKKKEGDPKPRASKEDNRAGSRREDL. An N-linked (GlcNAc...) asparagine glycan is attached at N192. A Prevents secretion from ER motif is present at residues 221 to 224; the sequence is REDL.

Belongs to the MESD family. Monomer. Interacts with LRP5; the interaction prevents LRP5 from forming aggregates and chaperones LRP6 to the plasma membrane. Interacts with LRP6; the interaction prevents LRP6 from forming aggregates and chaperones LRP6 to the plasma membrane. Interacts with LRP4; the interaction promotes glycosylation of LRP4 and its cell-surface expression. In terms of tissue distribution, expressed in many tissues, but not in skeletal muscles. In the retina expressed in retinal ganglion cells, inner and outer plexiform layers, photoreceptor inner and outer segments and retinal pigment epithelium (at protein level).

It localises to the endoplasmic reticulum. Chaperone specifically assisting the folding of beta-propeller/EGF modules within the family of low-density lipoprotein receptors (LDLRs). Acts as a modulator of the Wnt pathway through chaperoning the coreceptors of the canonical Wnt pathway, LRP5 and LRP6, to the plasma membrane. Essential for specification of embryonic polarity and mesoderm induction. Plays an essential role in neuromuscular junction (NMJ) formation by promoting cell-surface expression of LRP4. May regulate phagocytosis of apoptotic retinal pigment epithelium (RPE) cells. This is LRP chaperone MESD from Mus musculus (Mouse).